A 947-amino-acid polypeptide reads, in one-letter code: Bifunctional glutamine synthetase adenylyltransferase/adenylyl-removing enzyme (947 aa).

The interval 1–440 (MTPLSSPLSQ…VFNELIGDDE (440 aa)) is adenylyl removase. The tract at residues 450–947 (SEPWREVWQD…ASWRKWLVAV (498 aa)) is adenylyl transferase.

This sequence belongs to the GlnE family. It depends on Mg(2+) as a cofactor.

The enzyme catalyses [glutamine synthetase]-O(4)-(5'-adenylyl)-L-tyrosine + phosphate = [glutamine synthetase]-L-tyrosine + ADP. It carries out the reaction [glutamine synthetase]-L-tyrosine + ATP = [glutamine synthetase]-O(4)-(5'-adenylyl)-L-tyrosine + diphosphate. Functionally, involved in the regulation of glutamine synthetase GlnA, a key enzyme in the process to assimilate ammonia. When cellular nitrogen levels are high, the C-terminal adenylyl transferase (AT) inactivates GlnA by covalent transfer of an adenylyl group from ATP to specific tyrosine residue of GlnA, thus reducing its activity. Conversely, when nitrogen levels are low, the N-terminal adenylyl removase (AR) activates GlnA by removing the adenylyl group by phosphorolysis, increasing its activity. The regulatory region of GlnE binds the signal transduction protein PII (GlnB) which indicates the nitrogen status of the cell. In Salmonella gallinarum (strain 287/91 / NCTC 13346), this protein is Bifunctional glutamine synthetase adenylyltransferase/adenylyl-removing enzyme.